Consider the following 178-residue polypeptide: Large ribosomal subunit protein uL30 (178 aa).

It belongs to the universal ribosomal protein uL30 family. In terms of assembly, part of the 50S ribosomal subunit.

This chain is Large ribosomal subunit protein uL30, found in Pyrobaculum aerophilum (strain ATCC 51768 / DSM 7523 / JCM 9630 / CIP 104966 / NBRC 100827 / IM2).